We begin with the raw amino-acid sequence, 476 residues long: PRAME family member 5 (476 aa).

The LRR 1; degenerate repeat unit spans residues 97-124 (RWKLQVLDLQDVCENFWMVWSEAMAHGC). The LRR 2; degenerate repeat unit spans residues 179–203 (HLCCKKLKILGMPFRNIRSILKMVN). The stretch at 204-230 (LDCIQEVEVNCKWVLPILTQFTPYLGH) is one LRR 3; degenerate repeat. An LRR 4; degenerate repeat occupies 231 to 266 (MRNLQKLVLSHMDVSRYVSPEQKKEIVTQFTTQFLK). 5 LRR repeats span residues 267 to 292 (LCCL…LSCL), 293 to 324 (KTSL…SQLK), 325 to 345 (TLDL…QILL), 349 to 376 (AATL…ALSR), and 377 to 401 (CFEL…LLSH).

This sequence belongs to the PRAME family.

The polypeptide is PRAME family member 5 (Homo sapiens (Human)).